A 129-amino-acid chain; its full sequence is DNA-directed RNA polymerase subunit omega (129 aa).

The segment at 77-98 (VDEPESEVVPALSSAPQNPEAI) is disordered.

This sequence belongs to the RNA polymerase subunit omega family. As to quaternary structure, the RNAP catalytic core consists of 2 alpha, 1 beta, 1 beta' and 1 omega subunit. When a sigma factor is associated with the core the holoenzyme is formed, which can initiate transcription.

The catalysed reaction is RNA(n) + a ribonucleoside 5'-triphosphate = RNA(n+1) + diphosphate. In terms of biological role, promotes RNA polymerase assembly. Latches the N- and C-terminal regions of the beta' subunit thereby facilitating its interaction with the beta and alpha subunits. In Methylocella silvestris (strain DSM 15510 / CIP 108128 / LMG 27833 / NCIMB 13906 / BL2), this protein is DNA-directed RNA polymerase subunit omega.